The following is a 430-amino-acid chain: MKKQIFFTLILLISGLARADLVIEIDKGSRAAIPVAVVPFANESGQPLAEDIGQIFTEDLKRSGDIEPLDRTKMVSIPSKAEEIYFRDWGLLGQRYLLVGGVQYDAPSQVYKVRYELYNVQSQQRVIGKIISGKSEKLRDMGHAIADAVYEAVTGIRGVFSTRIAYVTLEKSGAKNIYRLEVADADGRRSTELLKRSMPIISPAWSPDGKKLAYVSFESQRPAIYVQDVDTGTRTQVTSFKGLNSAPTWSPDGTKLAVTLSKDGNAELYVLDLRNNSLKRLTNHWAIDTEASWSPDGRTIAFTSDRGGGPQIYLVDASGGSPRRLTFEGRYNSRPRFSVDGKKVYYVHQRDGSFNVASLDLESGQDQILTQTEMDESPSVAPNGSMIIYATQKNGKGVLAVVGVNSGSKYTLPAQFGDVREPAWSPYISR.

Residues Met-1–Ala-19 form the signal peptide.

This sequence belongs to the TolB family. In terms of assembly, the Tol-Pal system is composed of five core proteins: the inner membrane proteins TolA, TolQ and TolR, the periplasmic protein TolB and the outer membrane protein Pal. They form a network linking the inner and outer membranes and the peptidoglycan layer.

It is found in the periplasm. Part of the Tol-Pal system, which plays a role in outer membrane invagination during cell division and is important for maintaining outer membrane integrity. The chain is Tol-Pal system protein TolB from Hahella chejuensis (strain KCTC 2396).